The following is a 215-amino-acid chain: Adenylate kinase (215 aa).

10 to 15 (GAGKGT) serves as a coordination point for ATP. Residues 30–58 (STGDMLREAKRSGTLEKRYLDIMDSGGLL) are NMP. AMP is bound by residues T31, R36, 56 to 58 (GLL), 84 to 87 (GFPR), and Q91. Positions 128-158 (HRRTDKRSGQIYHLVYNPPPPGAELEHRADD) are LID. Residues R129 and 138-139 (IY) contribute to the ATP site. Residues R155 and R166 each coordinate AMP. G194 contributes to the ATP binding site.

It belongs to the adenylate kinase family. Monomer.

The protein resides in the cytoplasm. The catalysed reaction is AMP + ATP = 2 ADP. The protein operates within purine metabolism; AMP biosynthesis via salvage pathway; AMP from ADP: step 1/1. Its function is as follows. Catalyzes the reversible transfer of the terminal phosphate group between ATP and AMP. Plays an important role in cellular energy homeostasis and in adenine nucleotide metabolism. The sequence is that of Adenylate kinase from Sorangium cellulosum (strain So ce56) (Polyangium cellulosum (strain So ce56)).